A 427-amino-acid chain; its full sequence is U1 small nuclear ribonucleoprotein 70 kDa (427 aa).

2 disordered regions span residues 82-102 and 215-427; these read EPGDPEYAPPKPEVELPSQKR and RGRT…EYVR. A compositionally biased stretch (basic and acidic residues) spans 93–102; the sequence is PEVELPSQKR. One can recognise an RRM domain in the interval 138–216; sequence KTLFVSRLNY…RRVLVDVERG (79 aa). Residues 227 to 241 show a composition bias toward gly residues; it reads LGGGLGTSRVGGGEE. Composition is skewed to basic and acidic residues over residues 257–402 and 409–427; these read EPSR…RYDK and RYEREYKRSKRSESREYVR. Ser282 is subject to Phosphoserine.

Component of the spliceosome. Interacts with CYP63, U2AF35A, U2AF35B, SRZ21, RSZ22, SR34, SR45, SR45A and SCL33. Post-translationally, phosphorylated. The association and dissociation with SR45 is not affected by the phosphorylation status. As to expression, ubiquitous.

The protein localises to the nucleus speckle. Its subcellular location is the nucleus. It localises to the nucleoplasm. Its function is as follows. Mediates the splicing of pre-mRNA by binding to the loop I region of U1-snRNA. This is U1 small nuclear ribonucleoprotein 70 kDa (RNU1) from Arabidopsis thaliana (Mouse-ear cress).